Reading from the N-terminus, the 174-residue chain is tRNA (cytidine(56)-2'-O)-methyltransferase (174 aa).

S-adenosyl-L-methionine is bound by residues leucine 80, 105-109, and 123-130; these read GAEKV and ISNQPHSE.

It belongs to the aTrm56 family. In terms of assembly, homodimer.

The protein resides in the cytoplasm. It catalyses the reaction cytidine(56) in tRNA + S-adenosyl-L-methionine = 2'-O-methylcytidine(56) in tRNA + S-adenosyl-L-homocysteine + H(+). Its function is as follows. Specifically catalyzes the AdoMet-dependent 2'-O-ribose methylation of cytidine at position 56 in tRNAs. The polypeptide is tRNA (cytidine(56)-2'-O)-methyltransferase (Metallosphaera sedula (strain ATCC 51363 / DSM 5348 / JCM 9185 / NBRC 15509 / TH2)).